The primary structure comprises 933 residues: DNA repair-scaffolding protein (933 aa).

Disordered stretches follow at residues 1-34 (MSGARRPGTSKRKRNWHIEHPSFREERSQQLRRG), 67-174 (SEKT…KGTL), and 205-224 (YSSDSEKEEDPEHSLFIDSE). Basic and acidic residues-rich tracts occupy residues 16–29 (WHIEHPSFREERSQ), 71–87 (GITEKHLELSPKPKTET), and 119–132 (RDGRHGPRADRLGD). Over residues 138 to 148 (PEDEDIEDELQ) the composition is skewed to acidic residues. The segment at 175 to 469 (DISDCDSCAS…GTGWTHGHEK (295 aa)) is necessary for interaction with RAD51. Positions 214–224 (DPEHSLFIDSE) are enriched in basic and acidic residues.

In terms of assembly, found in a complex, at least composed of BLM, RAD51 and SPIDR; the complex formation is mediated by SPIDR. Interacts (via C-terminal region) with BLM; the interaction is direct. Interacts with RAD51; the interaction is direct. Interacts (via the C-terminal region) with FIGNL1 (via N-terminal one-half region); the interaction is direct.

The protein localises to the nucleus. Its function is as follows. Plays a role in DNA double-strand break (DBS) repair via homologous recombination (HR). Serves as a scaffolding protein that helps to promote the recruitment of DNA-processing enzymes like the helicase BLM and recombinase RAD51 to site of DNA damage, and hence contributes to maintain genomic integrity. The chain is DNA repair-scaffolding protein (Spidr) from Mus musculus (Mouse).